The chain runs to 354 residues: Probable dual-specificity RNA methyltransferase RlmN (354 aa).

Residue glutamate 94 is the Proton acceptor of the active site. The region spanning 103-332 (GRRRNTACLS…QEAGLEAAIR (230 aa)) is the Radical SAM core domain. Cysteine 110 and cysteine 343 are oxidised to a cystine. [4Fe-4S] cluster is bound by residues cysteine 117, cysteine 121, and cysteine 124. Residues 169–170 (GE), serine 201, 224–226 (SLH), and asparagine 300 contribute to the S-adenosyl-L-methionine site. Cysteine 343 acts as the S-methylcysteine intermediate in catalysis.

Belongs to the radical SAM superfamily. RlmN family. [4Fe-4S] cluster serves as cofactor.

The protein localises to the cytoplasm. It catalyses the reaction adenosine(2503) in 23S rRNA + 2 reduced [2Fe-2S]-[ferredoxin] + 2 S-adenosyl-L-methionine = 2-methyladenosine(2503) in 23S rRNA + 5'-deoxyadenosine + L-methionine + 2 oxidized [2Fe-2S]-[ferredoxin] + S-adenosyl-L-homocysteine. The catalysed reaction is adenosine(37) in tRNA + 2 reduced [2Fe-2S]-[ferredoxin] + 2 S-adenosyl-L-methionine = 2-methyladenosine(37) in tRNA + 5'-deoxyadenosine + L-methionine + 2 oxidized [2Fe-2S]-[ferredoxin] + S-adenosyl-L-homocysteine. Its function is as follows. Specifically methylates position 2 of adenine 2503 in 23S rRNA and position 2 of adenine 37 in tRNAs. In Moorella thermoacetica (strain ATCC 39073 / JCM 9320), this protein is Probable dual-specificity RNA methyltransferase RlmN.